A 344-amino-acid polypeptide reads, in one-letter code: Aspartate-semialdehyde dehydrogenase (344 aa).

NADP(+) is bound by residues 10 to 13 and 38 to 39; these read TGQV and RS. Arg-101 serves as a coordination point for phosphate. Residue Cys-131 is the Acyl-thioester intermediate of the active site. Gln-158 is a substrate binding site. 161-162 lines the NADP(+) pocket; that stretch reads SG. Phosphate is bound at residue Lys-228. Arg-250 lines the substrate pocket. Catalysis depends on His-257, which acts as the Proton acceptor. Residue Asn-326 coordinates NADP(+).

It belongs to the aspartate-semialdehyde dehydrogenase family. Homodimer.

It carries out the reaction L-aspartate 4-semialdehyde + phosphate + NADP(+) = 4-phospho-L-aspartate + NADPH + H(+). It functions in the pathway amino-acid biosynthesis; L-lysine biosynthesis via DAP pathway; (S)-tetrahydrodipicolinate from L-aspartate: step 2/4. The protein operates within amino-acid biosynthesis; L-methionine biosynthesis via de novo pathway; L-homoserine from L-aspartate: step 2/3. Its pathway is amino-acid biosynthesis; L-threonine biosynthesis; L-threonine from L-aspartate: step 2/5. In terms of biological role, catalyzes the NADPH-dependent formation of L-aspartate-semialdehyde (L-ASA) by the reductive dephosphorylation of L-aspartyl-4-phosphate. The polypeptide is Aspartate-semialdehyde dehydrogenase (Corynebacterium glutamicum (strain ATCC 13032 / DSM 20300 / JCM 1318 / BCRC 11384 / CCUG 27702 / LMG 3730 / NBRC 12168 / NCIMB 10025 / NRRL B-2784 / 534)).